The following is a 219-amino-acid chain: Protein DCL homolog, chloroplastic (219 aa).

The N-terminal 48 residues, 1–48 (MSLASIPSSSPVASPYFRCRTYIFSFSSSPLCLYFPRGDSTSLRPRVR), are a transit peptide targeting the chloroplast. The tract at residues 70-96 (LRRPRIASEESSEEEEEEEEENSEGDE) is disordered. Acidic residues predominate over residues 79 to 96 (ESSEEEEEEEEENSEGDE).

In terms of tissue distribution, expressed in leaves, stems, flowers and siliques.

The protein resides in the plastid. It is found in the chloroplast. Its function is as follows. Required for normal plastid function and plant development. Required for correct plastid ribosome assembly. Required for processing and maturation of 4.5S rRNA. This chain is Protein DCL homolog, chloroplastic, found in Arabidopsis thaliana (Mouse-ear cress).